The chain runs to 189 residues: GMP synthase [glutamine-hydrolyzing] subunit A (189 aa).

The Glutamine amidotransferase type-1 domain maps to lysine 5–tyrosine 189. The Nucleophile role is filled by cysteine 79. Active-site residues include histidine 166 and glutamate 168.

As to quaternary structure, heterodimer composed of a glutamine amidotransferase subunit (A) and a GMP-binding subunit (B).

It carries out the reaction XMP + L-glutamine + ATP + H2O = GMP + L-glutamate + AMP + diphosphate + 2 H(+). It functions in the pathway purine metabolism; GMP biosynthesis; GMP from XMP (L-Gln route): step 1/1. Catalyzes the synthesis of GMP from XMP. The polypeptide is GMP synthase [glutamine-hydrolyzing] subunit A (Methanococcoides burtonii (strain DSM 6242 / NBRC 107633 / OCM 468 / ACE-M)).